The chain runs to 304 residues: UDP-3-O-acyl-N-acetylglucosamine deacetylase (304 aa).

Zn(2+) is bound by residues histidine 78, histidine 237, and aspartate 241. Catalysis depends on histidine 264, which acts as the Proton donor.

The protein belongs to the LpxC family. Zn(2+) is required as a cofactor.

The enzyme catalyses a UDP-3-O-[(3R)-3-hydroxyacyl]-N-acetyl-alpha-D-glucosamine + H2O = a UDP-3-O-[(3R)-3-hydroxyacyl]-alpha-D-glucosamine + acetate. Its pathway is glycolipid biosynthesis; lipid IV(A) biosynthesis; lipid IV(A) from (3R)-3-hydroxytetradecanoyl-[acyl-carrier-protein] and UDP-N-acetyl-alpha-D-glucosamine: step 2/6. Functionally, catalyzes the hydrolysis of UDP-3-O-myristoyl-N-acetylglucosamine to form UDP-3-O-myristoylglucosamine and acetate, the committed step in lipid A biosynthesis. The chain is UDP-3-O-acyl-N-acetylglucosamine deacetylase from Marinobacter nauticus (strain ATCC 700491 / DSM 11845 / VT8) (Marinobacter aquaeolei).